Here is a 403-residue protein sequence, read N- to C-terminus: Aspartic protease PEP1 (403 aa).

Residues 1 to 20 (MVQISQIGAVLAVCSTLTVA) form the signal peptide. Positions 21 to 67 (APTKGKARFNVPQVAVPMKAVHHPAVAYARALHKFGMKVPKAVSDAA) are cleaved as a propeptide — activation peptide. The Peptidase A1 domain occupies 82–400 (YVTQVTVGQG…DTEGPRIGFA (319 aa)). Aspartate 98 is a catalytic residue. Residues asparagine 159 and asparagine 270 are each glycosylated (N-linked (GlcNAc...) asparagine). Residue aspartate 293 is part of the active site. Cysteine 329 and cysteine 361 form a disulfide bridge.

Belongs to the peptidase A1 family.

The protein resides in the secreted. The catalysed reaction is Hydrolysis of proteins with broad specificity. Generally favors hydrophobic residues in P1 and P1', but also accepts Lys in P1, which leads to activation of trypsinogen. Does not clot milk.. Secreted aspartic endopeptidase that allows assimilation of proteinaceous substrates. Can catalyze hydrolysis of the major structural proteins of basement membrane, elastin, collagen, and laminin. Thought to play a significant role in virulence. The protein is Aspartic protease PEP1 (PEP1) of Arthroderma benhamiae (strain ATCC MYA-4681 / CBS 112371) (Trichophyton mentagrophytes).